Reading from the N-terminus, the 306-residue chain is Homoserine O-acetyltransferase (306 aa).

Cysteine 142 functions as the Acyl-thioester intermediate in the catalytic mechanism. Substrate contacts are provided by lysine 163 and serine 192. Catalysis depends on histidine 235, which acts as the Proton acceptor. Glutamate 237 is a catalytic residue. A substrate-binding site is contributed by arginine 249.

It belongs to the MetA family.

It is found in the cytoplasm. The enzyme catalyses L-homoserine + acetyl-CoA = O-acetyl-L-homoserine + CoA. It participates in amino-acid biosynthesis; L-methionine biosynthesis via de novo pathway; O-acetyl-L-homoserine from L-homoserine: step 1/1. In terms of biological role, transfers an acetyl group from acetyl-CoA to L-homoserine, forming acetyl-L-homoserine. The polypeptide is Homoserine O-acetyltransferase (Brucella melitensis biotype 1 (strain ATCC 23456 / CCUG 17765 / NCTC 10094 / 16M)).